The primary structure comprises 218 residues: Methylthioribulose-1-phosphate dehydratase (218 aa).

Zn(2+) is bound by residues His-107 and His-109.

Belongs to the aldolase class II family. MtnB subfamily. Zn(2+) is required as a cofactor.

The catalysed reaction is 5-(methylsulfanyl)-D-ribulose 1-phosphate = 5-methylsulfanyl-2,3-dioxopentyl phosphate + H2O. It participates in amino-acid biosynthesis; L-methionine biosynthesis via salvage pathway; L-methionine from S-methyl-5-thio-alpha-D-ribose 1-phosphate: step 2/6. Catalyzes the dehydration of methylthioribulose-1-phosphate (MTRu-1-P) into 2,3-diketo-5-methylthiopentyl-1-phosphate (DK-MTP-1-P). This Xylella fastidiosa (strain 9a5c) protein is Methylthioribulose-1-phosphate dehydratase.